Reading from the N-terminus, the 793-residue chain is Short transient receptor potential channel 1 (793 aa).

Residues 1–30 are disordered; the sequence is MMAALYPSTDLSGASSSSLPSSPSSSSPNE. Residues 1–345 lie on the Cytoplasmic side of the membrane; the sequence is MMAALYPSTD…FGQMSGYRRK (345 aa). The span at 15–28 shows a compositional bias: low complexity; it reads SSSSLPSSPSSSSP. ANK repeat units lie at residues 46–75, 83–109, 111–156, and 158–180; these read LNEKLFLLACDKGDYYMVKEILEENSSGDL, LGRNAVTITIENENLDILQLLLDYGCQ, ADAL…EYST, and MDVAPVILAAHRNNYEILTMLLK. Residues histidine 189, cysteine 193, cysteine 195, and cysteine 198 each coordinate Zn(2+). The discontinuously helical intramembrane region spans 346-379; sequence PTCKKIMTVLTVGIFWPVLSLCYLIAPKSQFGRI. Topologically, residues 380–386 are cytoplasmic; the sequence is IHTPFMK. The chain crosses the membrane as a helical span at residues 387 to 404; the sequence is FIIHGASYFTFLLLLNLY. Over 405-422 the chain is Extracellular; it reads SLVYHEDKKNTMGPALER. The chain crosses the membrane as a helical span at residues 423-439; sequence IDYLLILWIIGMIWSDI. Topologically, residues 440–455 are cytoplasmic; that stretch reads KRLWYEGLEDFLEESR. The chain crosses the membrane as a helical span at residues 456–475; that stretch reads NQLSFVMNSLYLATFALKEE. The Extracellular segment spans residues 476–496; the sequence is AHNKFHDFADRKDWDAFHPTL. The chain crosses the membrane as a helical span at residues 497-517; that stretch reads VAEGLFAFANVLSYLRLFFYV. The Cytoplasmic segment spans residues 518 to 536; sequence YTSSILGPLQISMGRMLQD. A helical membrane pass occupies residues 537-558; that stretch reads FGKFLGMFLLVLFSFTIGLTQL. Over 559–623 the chain is Extracellular; sequence YDKGYTPKEQ…GEELQSFVGA (65 aa). Cysteine 571 and cysteine 576 are oxidised to a cystine. A helical transmembrane segment spans residues 624 to 644; that stretch reads FIVGTYNVVVVIVLTKLLVAM. Residues 645 to 793 lie on the Cytoplasmic side of the membrane; sequence LHKSFQLIAN…SKYAMFYPRN (149 aa).

The protein belongs to the transient receptor (TC 1.A.4) family. STrpC subfamily. TRPC1 sub-subfamily. Heterotetramer with TRPC4 and/or TRPC5. Forms a heteromeric ion channel with TRPC4, with a 1:3 TRPC1:TRPC4 stoichiometry. Unlike other TRP channel proteins, does not form a homomeric channel. Interacts with TRPC4AP. Interacts with ITPR3. Interacts with MX1 and RNF24. Interacts with FKBP4. Interacts with PLSCR1. Interacts with PKD2L2. Forms a heterotetramer with PKD2 with a 2:2 stoichiometry; has distinct channel properties separate from PKD2 or TRPC1 homomers alone. In terms of processing, activation of PRKCA induces phosphorylation of TRPC1 and subsequent Ca2+ entry into cells.

Its subcellular location is the cell membrane. The enzyme catalyses Ca(2+)(in) = Ca(2+)(out). It carries out the reaction Na(+)(in) = Na(+)(out). The catalysed reaction is Li(+)(in) = Li(+)(out). It catalyses the reaction Cs(+)(in) = Cs(+)(out). May be operated by a phosphatidylinositol second messenger system activated by receptor tyrosine kinases or G-protein coupled receptors. Also activated by intracellular calcium store depletion. In terms of biological role, forms a receptor-activated non-selective calcium permeant cation channel. Forms a heteromeric ion channel with TRPC4 or TRPC5 that has reduced calcium permeability compared to the homomeric TRPC4 or TRPC5 channel. Also permeable to monovalent ions including sodium, lithium and cesium ions. This chain is Short transient receptor potential channel 1 (TRPC1), found in Bos taurus (Bovine).